An 804-amino-acid polypeptide reads, in one-letter code: Phenylalanine--tRNA ligase beta subunit (804 aa).

A tRNA-binding domain is found at 38–148 (RAAFRAFTIA…ENAPVGTSFA (111 aa)). Residues 401–476 (HTARVIDFPV…RIHGINRIDP (76 aa)) form the B5 domain. 4 residues coordinate Mg(2+): Asp-454, Asp-460, Glu-463, and Glu-464. The region spanning 710 to 803 (SLFQSLKRDY…VAKQTGGVLR (94 aa)) is the FDX-ACB domain.

This sequence belongs to the phenylalanyl-tRNA synthetase beta subunit family. Type 1 subfamily. In terms of assembly, tetramer of two alpha and two beta subunits. Mg(2+) is required as a cofactor.

It localises to the cytoplasm. It carries out the reaction tRNA(Phe) + L-phenylalanine + ATP = L-phenylalanyl-tRNA(Phe) + AMP + diphosphate + H(+). The chain is Phenylalanine--tRNA ligase beta subunit from Brucella suis biovar 1 (strain 1330).